Consider the following 368-residue polypeptide: Probable endopolygalacturonase A (368 aa).

The N-terminal stretch at 1-18 is a signal peptide; sequence MRSVELLSLAALGSLVAA. A propeptide spanning residues 19 to 31 is cleaved from the precursor; sequence APAPSRVSDLTKR. The cysteines at positions 35 and 50 are disulfide-linked. PbH1 repeat units lie at residues 140 to 162, 167 to 192, 193 to 214, 215 to 235, 244 to 265, 273 to 295, and 307 to 352; these read LEDS…SVQA, LIDI…DISE, STGV…AINS, GENI…SIGS, VKNV…RIKT, VSEV…VIEQ, and TTGV…DITG. The active-site Proton donor is the aspartate 207. Cysteine 209 and cysteine 225 are oxidised to a cystine. Histidine 229 is a catalytic residue. Asparagine 246 carries an N-linked (GlcNAc...) asparagine glycan. Cystine bridges form between cysteine 335/cysteine 340 and cysteine 359/cysteine 368.

The protein belongs to the glycosyl hydrolase 28 family.

The protein localises to the secreted. The enzyme catalyses (1,4-alpha-D-galacturonosyl)n+m + H2O = (1,4-alpha-D-galacturonosyl)n + (1,4-alpha-D-galacturonosyl)m.. Functionally, involved in maceration and soft-rotting of plant tissue. Hydrolyzes the 1,4-alpha glycosidic bonds of de-esterified pectate in the smooth region of the plant cell wall. This is Probable endopolygalacturonase A (pgaA) from Neosartorya fischeri (strain ATCC 1020 / DSM 3700 / CBS 544.65 / FGSC A1164 / JCM 1740 / NRRL 181 / WB 181) (Aspergillus fischerianus).